The sequence spans 106 residues: Protein Rev (106 aa).

The tract at residues 8-16 (VIKFLYQSN) is homomultimerization. Positions 13–36 (YQSNPPPRPEGTRQARRNRRRRWR) are disordered. Positions 24 to 40 (TRQARRNRRRRWRARQR) match the Nuclear localization signal and RNA-binding (RRE) motif. Residues 26–36 (QARRNRRRRWR) are compositionally biased toward basic residues. The short motif at 63-74 (LQLPPLERLTLD) is the Nuclear export signal and binding to XPO1 element. Phosphoserine; by host is present on residues S82 and S89.

This sequence belongs to the HIV-1 REV protein family. As to quaternary structure, homomultimer; when bound to the RRE. Multimeric assembly is essential for activity and may involve XPO1. Binds to human KPNB1, XPO1, TNPO1, RANBP5 and IPO7. Interacts with the viral Integrase. Interacts with human KHDRBS1. Interacts with human NAP1; this interaction decreases Rev multimerization and stimulates its activity. Interacts with human DEAD-box helicases DDX3 and DDX24; these interactions may serve for viral RNA export to the cytoplasm and packaging, respectively. Interacts with human PSIP1; this interaction may inhibit HIV-1 DNA integration by promoting dissociation of the Integrase-LEDGF/p75 complex. Asymmetrically arginine dimethylated at one site by host PRMT6. Methylation impairs the RNA-binding activity and export of viral RNA from the nucleus to the cytoplasm. Post-translationally, phosphorylated by protein kinase CK2. Presence of, and maybe binding to the N-terminus of the regulatory beta subunit of CK2 is necessary for CK2-mediated Rev's phosphorylation.

It is found in the host nucleus. It localises to the host nucleolus. The protein localises to the host cytoplasm. In terms of biological role, escorts unspliced or incompletely spliced viral pre-mRNAs (late transcripts) out of the nucleus of infected cells. These pre-mRNAs carry a recognition sequence called Rev responsive element (RRE) located in the env gene, that is not present in fully spliced viral mRNAs (early transcripts). This function is essential since most viral proteins are translated from unspliced or partially spliced pre-mRNAs which cannot exit the nucleus by the pathway used by fully processed cellular mRNAs. Rev itself is translated from a fully spliced mRNA that readily exits the nucleus. Rev's nuclear localization signal (NLS) binds directly to KPNB1/Importin beta-1 without previous binding to KPNA1/Importin alpha-1. KPNB1 binds to the GDP bound form of RAN (Ran-GDP) and targets Rev to the nucleus. In the nucleus, the conversion from Ran-GDP to Ran-GTP dissociates Rev from KPNB1 and allows Rev's binding to the RRE in viral pre-mRNAs. Rev multimerization on the RRE via cooperative assembly exposes its nuclear export signal (NES) to the surface. Rev can then form a complex with XPO1/CRM1 and Ran-GTP, leading to nuclear export of the complex. Conversion from Ran-GTP to Ran-GDP mediates dissociation of the Rev/RRE/XPO1/RAN complex, so that Rev can return to the nucleus for a subsequent round of export. Beside KPNB1, also seems to interact with TNPO1/Transportin-1, RANBP5/IPO5 and IPO7/RANBP7 for nuclear import. The nucleoporin-like HRB/RIP is an essential cofactor that probably indirectly interacts with Rev to release HIV RNAs from the perinuclear region to the cytoplasm. This Homo sapiens (Human) protein is Protein Rev.